The chain runs to 240 residues: Fibronectin type III domain-containing protein 5 (240 aa).

The span at 1 to 10 shows a compositional bias: gly residues; sequence MQAARGGAGR. Residues 1 to 33 are disordered; it reads MQAARGGAGRPGREGRGLERECERSPGPGVAMP. Basic and acidic residues predominate over residues 11–24; it reads PGREGRGLERECER. Residues 64–155 form the Fibronectin type-III domain; sequence APVNVTVRHL…EPVLFKTPRE (92 aa). 2 N-linked (GlcNAc...) asparagine glycosylation sites follow: Asn67 and Asn112. The chain crosses the membrane as a helical span at residues 181–201; sequence GEVLIIVVVLFMWAGVIALFC. The segment covering 210-221 has biased composition (basic and acidic residues); that stretch reads NEPNNNKEKTKS. Residues 210 to 240 are disordered; sequence NEPNNNKEKTKSASETSTPEHQGGGLLRSKI. Residues 231 to 240 are compositionally biased toward gly residues; sequence QGGGLLRSKI. The Microbody targeting signal motif lies at 238 to 240; the sequence is SKI.

In terms of assembly, dimer; may exist in other oligomeric forms. Post-translationally, the extracellular domain is cleaved and released from the cell membrane. N-Glycosylated. In adult, it is highly expressed in skeletal muscle, heart and brain.

The protein resides in the cell membrane. The protein localises to the peroxisome membrane. It localises to the secreted. Mediates beneficial effects of muscular exercise. Induces browning of white adipose tissue by stimulating UCP1 expression, at least in part, via the nuclear receptor PPARA. The polypeptide is Fibronectin type III domain-containing protein 5 (Fndc5) (Mus musculus (Mouse)).